The following is a 147-amino-acid chain: Thyrotropin subunit beta (147 aa).

The signal sequence occupies residues 1-20; it reads MRVVLLASAVLCLLAGQVLS. 6 disulfide bridges follow: cysteine 22/cysteine 72, cysteine 36/cysteine 87, cysteine 39/cysteine 126, cysteine 47/cysteine 103, cysteine 51/cysteine 105, and cysteine 108/cysteine 115. An N-linked (GlcNAc...) asparagine glycan is attached at asparagine 43.

This sequence belongs to the glycoprotein hormones subunit beta family. As to quaternary structure, heterodimer of a common alpha chain and a unique beta chain which confers biological specificity to thyrotropin, lutropin, follitropin and gonadotropin.

The protein localises to the secreted. Its function is as follows. Indispensable for the control of thyroid structure and metabolism. May play some role in the biological processes of the immature fishes. In Anguilla anguilla (European freshwater eel), this protein is Thyrotropin subunit beta (tshb).